A 310-amino-acid chain; its full sequence is Acetyl-coenzyme A carboxylase carboxyl transferase subunit alpha (310 aa).

The CoA carboxyltransferase C-terminal domain maps to 36–286; that stretch reads NLEKEITKTY…GEYILKQLDE (251 aa).

This sequence belongs to the AccA family. In terms of assembly, acetyl-CoA carboxylase is a heterohexamer composed of biotin carboxyl carrier protein (AccB), biotin carboxylase (AccC) and two subunits each of ACCase subunit alpha (AccA) and ACCase subunit beta (AccD).

The protein localises to the cytoplasm. It catalyses the reaction N(6)-carboxybiotinyl-L-lysyl-[protein] + acetyl-CoA = N(6)-biotinyl-L-lysyl-[protein] + malonyl-CoA. It functions in the pathway lipid metabolism; malonyl-CoA biosynthesis; malonyl-CoA from acetyl-CoA: step 1/1. In terms of biological role, component of the acetyl coenzyme A carboxylase (ACC) complex. First, biotin carboxylase catalyzes the carboxylation of biotin on its carrier protein (BCCP) and then the CO(2) group is transferred by the carboxyltransferase to acetyl-CoA to form malonyl-CoA. This is Acetyl-coenzyme A carboxylase carboxyl transferase subunit alpha from Campylobacter fetus subsp. fetus (strain 82-40).